A 200-amino-acid chain; its full sequence is dITP/XTP pyrophosphatase (200 aa).

Residue T7 to K12 participates in substrate binding. Mg(2+) contacts are provided by E38 and D73. The active-site Proton acceptor is D73. Substrate contacts are provided by residues S74, F154–D157, K177, and H182–R183.

The protein belongs to the HAM1 NTPase family. Homodimer. The cofactor is Mg(2+).

It carries out the reaction XTP + H2O = XMP + diphosphate + H(+). It catalyses the reaction dITP + H2O = dIMP + diphosphate + H(+). The enzyme catalyses ITP + H2O = IMP + diphosphate + H(+). In terms of biological role, pyrophosphatase that catalyzes the hydrolysis of nucleoside triphosphates to their monophosphate derivatives, with a high preference for the non-canonical purine nucleotides XTP (xanthosine triphosphate), dITP (deoxyinosine triphosphate) and ITP. Seems to function as a house-cleaning enzyme that removes non-canonical purine nucleotides from the nucleotide pool, thus preventing their incorporation into DNA/RNA and avoiding chromosomal lesions. The sequence is that of dITP/XTP pyrophosphatase from Campylobacter jejuni subsp. jejuni serotype O:6 (strain 81116 / NCTC 11828).